Here is a 194-residue protein sequence, read N- to C-terminus: MTELALILVSAILVNNFVLVQFLGLCPFMGVSRKIETAIGLSLATTFVLTLAAICSYILQRYVLRPLDLEFLRTIGFILVIAVVVQFTEMLVKKTSPLLYRVLGIFLPLITTNCIVLGVALLNANRAEYGFLEATTQGFGAGLGFSLVLVLFAALRERIAIADVPAPFRGAAIGMITAGLMSLAFMGFSGLIRP.

Helical transmembrane passes span 4–24 (LALI…QFLG), 39–59 (IGLS…SYIL), 71–91 (FLRT…TEML), 102–122 (VLGI…VALL), 135–155 (TTQG…FAAL), and 172–192 (AIGM…SGLI).

This sequence belongs to the NqrDE/RnfAE family. The complex is composed of six subunits: RnfA, RnfB, RnfC, RnfD, RnfE and RnfG.

It is found in the cell inner membrane. Part of a membrane-bound complex that couples electron transfer with translocation of ions across the membrane. In Pseudomonas paraeruginosa (strain DSM 24068 / PA7) (Pseudomonas aeruginosa (strain PA7)), this protein is Ion-translocating oxidoreductase complex subunit A.